The following is a 66-amino-acid chain: Delta-buthitoxin-Hj1a (66 aa).

In terms of domain architecture, LCN-type CS-alpha/beta spans 4–66; it reads RDAYIAQPHN…EPIKVPGKCH (63 aa). 4 cysteine pairs are disulfide-bonded: cysteine 14–cysteine 65, cysteine 18–cysteine 38, cysteine 24–cysteine 48, and cysteine 28–cysteine 50.

This sequence belongs to the long (4 C-C) scorpion toxin superfamily. Sodium channel inhibitor family. Alpha subfamily. Expressed by the venom gland.

Its subcellular location is the secreted. In terms of biological role, this recombinant toxin slows fast inactivation on Nav1.1/SCN1A (EC(50)=17 nM), Nav1.4/SN4A (EC(50)=7.5 nM), Nav1.5/SCN5A (EC(50)=9.2 nM) and Nav1.6/SCN8A (EC(50)=37.3 nM) voltage-gated sodium channels. On Nav1.1/SCN1A channel, it acts as an agonist by inducing a shift in both the voltage dependence of channel inactivation (alpha-toxin activity) and activation (beta-toxin activity). In vivo, shows moderate insecticidal activities. It induces irreversible paralysis in blowflies and lethal effects in D.melanogaster. The sequence is that of Delta-buthitoxin-Hj1a from Hottentotta judaicus (Black scorpion).